The primary structure comprises 566 residues: Oxygen-dependent choline dehydrogenase (566 aa).

Residue 7-36 coordinates FAD; sequence DYIICGAGSAGNVLATRLTEDPDVTVLLLE. Residues 180–202 are disordered; it reads NGYQQEGFGPMDRTVTPKGRRAS. His-474 acts as the Proton acceptor in catalysis.

Belongs to the GMC oxidoreductase family. FAD is required as a cofactor.

It carries out the reaction choline + A = betaine aldehyde + AH2. The catalysed reaction is betaine aldehyde + NAD(+) + H2O = glycine betaine + NADH + 2 H(+). It functions in the pathway amine and polyamine biosynthesis; betaine biosynthesis via choline pathway; betaine aldehyde from choline (cytochrome c reductase route): step 1/1. Involved in the biosynthesis of the osmoprotectant glycine betaine. Catalyzes the oxidation of choline to betaine aldehyde and betaine aldehyde to glycine betaine at the same rate. In Burkholderia cenocepacia (strain HI2424), this protein is Oxygen-dependent choline dehydrogenase.